Consider the following 315-residue polypeptide: Tyrosine recombinase XerC (315 aa).

Residues 1–103 form the Core-binding (CB) domain; that stretch reads MITSFYAFLD…AIKSFARFCV (103 aa). The Tyr recombinase domain maps to 124 to 306; that stretch reads ELPSPLTYEQ…SMKLKKQIHD (183 aa). Catalysis depends on residues arginine 164, lysine 188, histidine 258, arginine 261, and histidine 284. The active-site O-(3'-phospho-DNA)-tyrosine intermediate is the tyrosine 293.

Belongs to the 'phage' integrase family. XerC subfamily. As to quaternary structure, forms a cyclic heterotetrameric complex composed of two molecules of XerC and two molecules of XerD.

The protein localises to the cytoplasm. Site-specific tyrosine recombinase, which acts by catalyzing the cutting and rejoining of the recombining DNA molecules. The XerC-XerD complex is essential to convert dimers of the bacterial chromosome into monomers to permit their segregation at cell division. It also contributes to the segregational stability of plasmids. This is Tyrosine recombinase XerC from Chlamydia trachomatis serovar L2b (strain UCH-1/proctitis).